Consider the following 175-residue polypeptide: Beta-carotene hydroxylase (175 aa).

A Fatty acid hydroxylase domain is found at 11 to 136 (FVTVIGMEVI…RGKEGCVSFG (126 aa)).

Belongs to the sterol desaturase family.

It catalyses the reaction all-trans-beta-carotene + 4 reduced [2Fe-2S]-[ferredoxin] + 2 O2 + 4 H(+) = all-trans-zeaxanthin + 4 oxidized [2Fe-2S]-[ferredoxin] + 2 H2O. The protein operates within carotenoid biosynthesis; zeaxanthin biosynthesis. Catalyzes the hydroxylation reaction from beta-carotene to zeaxanthin. In Pantoea ananas (Erwinia uredovora), this protein is Beta-carotene hydroxylase (crtZ).